Here is a 228-residue protein sequence, read N- to C-terminus: Octanoyltransferase (228 aa).

The BPL/LPL catalytic domain occupies 40–225 (GEEAERVWLV…SFERVFDAAP (186 aa)). Residues 79–86 (RGGQWTYH), 156–158 (AIG), and 169–171 (GIA) each bind substrate. Cys-187 (acyl-thioester intermediate) is an active-site residue.

The protein belongs to the LipB family.

The protein localises to the cytoplasm. It catalyses the reaction octanoyl-[ACP] + L-lysyl-[protein] = N(6)-octanoyl-L-lysyl-[protein] + holo-[ACP] + H(+). The protein operates within protein modification; protein lipoylation via endogenous pathway; protein N(6)-(lipoyl)lysine from octanoyl-[acyl-carrier-protein]: step 1/2. Functionally, catalyzes the transfer of endogenously produced octanoic acid from octanoyl-acyl-carrier-protein onto the lipoyl domains of lipoate-dependent enzymes. Lipoyl-ACP can also act as a substrate although octanoyl-ACP is likely to be the physiological substrate. This is Octanoyltransferase from Acidiphilium cryptum (strain JF-5).